Consider the following 146-residue polypeptide: 3-dehydroquinate dehydratase (146 aa).

Tyr-24 functions as the Proton acceptor in the catalytic mechanism. Substrate is bound by residues Asn-73, His-79, and Asp-86. The active-site Proton donor is the His-99. Substrate-binding positions include 100–101 and Arg-110; that span reads LS.

It belongs to the type-II 3-dehydroquinase family. As to quaternary structure, homododecamer.

It catalyses the reaction 3-dehydroquinate = 3-dehydroshikimate + H2O. It functions in the pathway metabolic intermediate biosynthesis; chorismate biosynthesis; chorismate from D-erythrose 4-phosphate and phosphoenolpyruvate: step 3/7. Its function is as follows. Catalyzes a trans-dehydration via an enolate intermediate. In Shewanella oneidensis (strain ATCC 700550 / JCM 31522 / CIP 106686 / LMG 19005 / NCIMB 14063 / MR-1), this protein is 3-dehydroquinate dehydratase.